We begin with the raw amino-acid sequence, 447 residues long: Tubulin beta-1 chain (447 aa).

The GTP site is built by Gln-11, Glu-69, Ser-138, Gly-142, Thr-143, Gly-144, Asn-204, and Asn-226. Glu-69 provides a ligand contact to Mg(2+). The segment at 424–447 (QYQDATAEEEGEGDEEEAEGEAAA) is disordered. Residues 429 to 447 (TAEEEGEGDEEEAEGEAAA) are compositionally biased toward acidic residues.

This sequence belongs to the tubulin family. In terms of assembly, dimer of alpha and beta chains. A typical microtubule is a hollow water-filled tube with an outer diameter of 25 nm and an inner diameter of 15 nM. Alpha-beta heterodimers associate head-to-tail to form protofilaments running lengthwise along the microtubule wall with the beta-tubulin subunit facing the microtubule plus end conferring a structural polarity. Microtubules usually have 13 protofilaments but different protofilament numbers can be found in some organisms and specialized cells. Requires Mg(2+) as cofactor.

The protein resides in the cytoplasm. It localises to the cytoskeleton. Tubulin is the major constituent of microtubules, a cylinder consisting of laterally associated linear protofilaments composed of alpha- and beta-tubulin heterodimers. Microtubules grow by the addition of GTP-tubulin dimers to the microtubule end, where a stabilizing cap forms. Below the cap, tubulin dimers are in GDP-bound state, owing to GTPase activity of alpha-tubulin. This chain is Tubulin beta-1 chain (TUBB1), found in Cyanophora paradoxa.